Here is a 210-residue protein sequence, read N- to C-terminus: Type III pantothenate kinase (210 aa).

Position 5 to 12 (5 to 12 (DIGNTYLH)) interacts with ATP. Substrate-binding positions include Tyr-69 and 73–76 (GVDR). The active-site Proton acceptor is the Asp-75. A K(+)-binding site is contributed by Asp-90. Position 93 (Ser-93) interacts with ATP. Thr-145 contributes to the substrate binding site.

Belongs to the type III pantothenate kinase family. Homodimer. It depends on NH4(+) as a cofactor. K(+) is required as a cofactor.

It localises to the cytoplasm. The enzyme catalyses (R)-pantothenate + ATP = (R)-4'-phosphopantothenate + ADP + H(+). Its pathway is cofactor biosynthesis; coenzyme A biosynthesis; CoA from (R)-pantothenate: step 1/5. In terms of biological role, catalyzes the phosphorylation of pantothenate (Pan), the first step in CoA biosynthesis. The protein is Type III pantothenate kinase of Wolinella succinogenes (strain ATCC 29543 / DSM 1740 / CCUG 13145 / JCM 31913 / LMG 7466 / NCTC 11488 / FDC 602W) (Vibrio succinogenes).